Consider the following 78-residue polypeptide: MTDSIPKKPFKKGSLVFVDRENYIKSIEALASDDDLPNYVFEGPGEILSVKDEYAQVRWRRPVPDVWLKLDQLKEYTQ.

This sequence belongs to the complex I NdhO subunit family. NDH-1 can be composed of about 15 different subunits; different subcomplexes with different compositions have been identified which probably have different functions.

It is found in the cellular thylakoid membrane. It carries out the reaction a plastoquinone + NADH + (n+1) H(+)(in) = a plastoquinol + NAD(+) + n H(+)(out). The catalysed reaction is a plastoquinone + NADPH + (n+1) H(+)(in) = a plastoquinol + NADP(+) + n H(+)(out). Its function is as follows. NDH-1 shuttles electrons from an unknown electron donor, via FMN and iron-sulfur (Fe-S) centers, to quinones in the respiratory and/or the photosynthetic chain. The immediate electron acceptor for the enzyme in this species is believed to be plastoquinone. Couples the redox reaction to proton translocation, and thus conserves the redox energy in a proton gradient. Cyanobacterial NDH-1 also plays a role in inorganic carbon-concentration. This chain is NAD(P)H-quinone oxidoreductase subunit O, found in Prochlorococcus marinus (strain MIT 9215).